A 707-amino-acid chain; its full sequence is Ribosomal RNA large subunit methyltransferase K/L (707 aa).

One can recognise a THUMP domain in the interval 44 to 155 (VIYNLCLWSR…NDILTVSFDL (112 aa)).

Belongs to the methyltransferase superfamily. RlmKL family.

The protein resides in the cytoplasm. It carries out the reaction guanosine(2445) in 23S rRNA + S-adenosyl-L-methionine = N(2)-methylguanosine(2445) in 23S rRNA + S-adenosyl-L-homocysteine + H(+). The enzyme catalyses guanosine(2069) in 23S rRNA + S-adenosyl-L-methionine = N(2)-methylguanosine(2069) in 23S rRNA + S-adenosyl-L-homocysteine + H(+). Its function is as follows. Specifically methylates the guanine in position 2445 (m2G2445) and the guanine in position 2069 (m7G2069) of 23S rRNA. In Legionella pneumophila (strain Lens), this protein is Ribosomal RNA large subunit methyltransferase K/L.